The following is a 632-amino-acid chain: Cleavage stimulation factor subunit 2 tau variant (632 aa).

One can recognise an RRM domain in the interval 16–94 (RSVFVGNIPY…RALRVDNAAS (79 aa)). 2 disordered regions span residues 201 to 296 (IPGK…PGGA) and 365 to 433 (YMGP…TRPM). Residues 213–233 (PGGPGPSGPGGPGPGPAPGLC) are compositionally biased toward pro residues. A compositionally biased stretch (low complexity) spans 234–244 (PGPNVMLNQQN). The span at 275-287 (APGPIPAAVPGPG) shows a compositional bias: pro residues. The span at 365-375 (YMGPPHQGPPM) shows a compositional bias: low complexity. Composition is skewed to basic and acidic residues over residues 377 to 390 (HGHDNRGPASHDMR) and 420 to 433 (RGGRESRGMETRPM). One copy of the 1-1; approximate repeat lies at 428-432 (METRP). An 8 X 5 AA tandem repeats of M-E-T-R-[AG] region spans residues 428–466 (METRPMETEVLEPRGMERRMETCAMETRGMDARGLEMRG). The 1-2; approximate repeat unit spans residues 433–437 (METEV). The stretch at 438-442 (LEPRG) is one 1-3; approximate repeat. A 1-4; approximate repeat occupies 443 to 446 (MERR). A 1-5; approximate repeat occupies 447–451 (METCA). A 1-6 repeat occupies 452–456 (METRG). The stretch at 457–461 (MDARG) is one 1-7; approximate repeat. A 1-8; approximate repeat occupies 462–466 (LEMRG). A 2-1; approximate repeat occupies 508–512 (GGTMQ). A 12 X 5 AA tandem repeats of G-[AT]-G-[MI]-Q region spans residues 508 to 565 (GGTMQGAGIQGGGMQGAGMQGGGMQGAGMQGGGMQGAGMQAGMQGASMQGGMQGAGMQ). One copy of the 2-2 repeat lies at 513–517 (GAGIQ). A 2-3; approximate repeat occupies 518–522 (GGGMQ). Positions 519-543 (GGMQGAGMQGGGMQGAGMQGGGMQG) are enriched in gly residues. The tract at residues 519-590 (GGMQGAGMQG…GQSQVTPQDQ (72 aa)) is disordered. Residues 523 to 527 (GAGMQ) form a 2-4 repeat. Residues 528–532 (GGGMQ) form a 2-5; approximate repeat. Residues 533–537 (GAGMQ) form a 2-6 repeat. The 2-7; approximate repeat unit spans residues 538–542 (GGGMQ). The stretch at 543–547 (GAGMQ) is one 2-8 repeat. The segment covering 544 to 557 (AGMQAGMQGASMQG) has biased composition (low complexity). The 2-9; approximate repeat unit spans residues 548–551 (AGMQ). The 2-10; approximate repeat unit spans residues 552–556 (GASMQ). The stretch at 557–560 (GGMQ) is one 2-11; approximate repeat. Residues 558–574 (GMQGAGMQGASKQGGGQ) show a composition bias toward gly residues. The stretch at 561 to 565 (GAGMQ) is one 2-12 repeat. Residues 575–584 (PSSFSPGQSQ) show a composition bias toward low complexity. A Phosphoserine modification is found at Ser-579.

In terms of tissue distribution, expressed in testes, where it is restricted to pachytene spermatocytes and spermatids, and in the brain (at protein level).

It is found in the nucleus. Functionally, may play a significant role in AAUAAA-independent mRNA polyadenylation in germ cells. Directly involved in the binding to pre-mRNAs. This chain is Cleavage stimulation factor subunit 2 tau variant (Cstf2t), found in Mus musculus (Mouse).